A 286-amino-acid polypeptide reads, in one-letter code: MTVSKRFLAPVFAMVGGLVLAFSANADPVDEELVIDDIPMVTRAAAPEGHPFDEGLSGWLFREAETRETEADSFANPGMLAVERGADIWNTVEGSAGKSCASCHDDAATSMKNVGAQYPKWDADAKRPINIELQIDKCRVENMGAEPYKFDAEGQVALTSYIKHQSLGTPVKMDLSDGELQDWWEKGKELYYTRTGQLNFACASCHEDSMGKYIRADHLSQGQANGFPTYRFNTGGMVSLHNRFRGCIRDTRAEMPKAFSDELMALEVYVTWRGTGLSVETPAVRQ.

The signal sequence occupies residues 1 to 26 (MTVSKRFLAPVFAMVGGLVLAFSANA). In terms of domain architecture, Cytochrome c spans 80-166 (LAVERGADIW…ALTSYIKHQS (87 aa)). Residues Cys100, Cys103, His104, Cys138, Cys202, Cys205, and His206 each contribute to the heme site. Residue Arg243 coordinates substrate. Cys247 provides a ligand contact to heme. Cys247 serves as the catalytic Cysteine persulfide intermediate.

It belongs to the SoxA family. In terms of assembly, heterodimer of SoxA and SoxX. The cofactor is heme. In terms of processing, cysteine persulfide at Cys-247.

It localises to the periplasm. The catalysed reaction is L-cysteinyl-[SoxY protein] + thiosulfate + 2 Fe(III)-[cytochrome c] = S-sulfosulfanyl-L-cysteinyl-[SoxY protein] + 2 Fe(II)-[cytochrome c] + 2 H(+). It carries out the reaction S-sulfanyl-L-cysteinyl-[SoxY protein] + thiosulfate + 2 Fe(III)-[cytochrome c] = S-(2-sulfodisulfanyl)-L-cysteinyl-[SoxY protein] + 2 Fe(II)-[cytochrome c] + 2 H(+). Functionally, C-type diheme cytochrome, which is part of the SoxAX cytochrome complex involved in sulfur oxidation. The SoxAX complex catalyzes the formation of a heterodisulfide bond between the conserved cysteine residue on a sulfur carrier SoxYZ complex subunit SoxY and thiosulfate or other inorganic sulfur substrates. This leads to the liberation of two electrons, which may be transferred from the SoxAX complex to another cytochrome c that then channels them into the respiratory electron transport chain. Some electrons may be used for reductive CO(2) fixation. This is L-cysteine S-thiosulfotransferase subunit SoxA from Pseudaminobacter salicylatoxidans.